Consider the following 145-residue polypeptide: MTSRALLLLASALLGTPGLTFSGLNPESYDLATAHLSDGEQFCQGLTQEDLQGDLLTERERQGIACWSCRKILQKLEDLVGEQPNEATINEAASRVCRNLGLLRGACKKIMRTCLRLISRDILAGKKPQEVCVDIKLCKHKAGLI.

The first 22 residues, 1–22 (MTSRALLLLASALLGTPGLTFS), serve as a signal peptide directing secretion. Residues 23–62 (GLNPESYDLATAHLSDGEQFCQGLTQEDLQGDLLTERERQ) constitute a propeptide that is removed on maturation. A Saposin B-type domain is found at 62–142 (QGIACWSCRK…VDIKLCKHKA (81 aa)). 3 disulfide bridges follow: Cys-66–Cys-138, Cys-69–Cys-132, and Cys-97–Cys-107. Positions 141–145 (KAGLI) are excised as a propeptide.

Its subcellular location is the secreted. Its function is as follows. May be an effector molecule of cytotoxic activity. Has antimicrobial activity. The protein is Antimicrobial peptide NK-lysin (NKL) of Equus caballus (Horse).